A 135-amino-acid chain; its full sequence is HVA22-like protein d (135 aa).

3 helical membrane passes run 11 to 31 (LHSG…SVIA), 42 to 62 (QWLA…ILQS), and 63 to 83 (LIEW…WLVL).

It belongs to the DP1 family. In terms of tissue distribution, predominantly expressed in flower buds.

It is found in the membrane. This is HVA22-like protein d (HVA22D) from Arabidopsis thaliana (Mouse-ear cress).